A 219-amino-acid chain; its full sequence is Flagellin A (219 aa).

Residues 1–12 (MKVKEFMNNKKG) constitute a propeptide that is removed on maturation. 2 N-linked (GlcNAc...) asparagine glycosylation sites follow: Asn38 and Asn175.

This sequence belongs to the archaeal flagellin family. N-linked glycans consist of the 779 Da trisaccharide beta-ManNAc(Thr)-(1-4)-beta-GlcNAc3NAcA-(1-3)-beta-GlcNAc.

The protein localises to the archaeal flagellum. Flagellin is the subunit protein which polymerizes to form the filaments of archaeal flagella. The chain is Flagellin A (flaA) from Methanococcus voltae.